The sequence spans 461 residues: Putative forkhead-related transcription factor fkh-5 (461 aa).

A DNA-binding region (fork-head) is located at residues 171–262; that stretch reads QRPQLSYQLL…VEKEMIDVKT (92 aa).

It is found in the nucleus. In terms of biological role, transcription factor. Binds to DNA sequence motif 5'-CTGTTTCA-3'. Regulates expression of a class of small RNAs, known as 21U-RNAs, perhaps acting redundantly with fkh-4 and fkh-3. The sequence is that of Putative forkhead-related transcription factor fkh-5 (fkh-5) from Caenorhabditis elegans.